A 146-amino-acid chain; its full sequence is Small ribosomal subunit protein eS17 (146 aa).

The protein belongs to the eukaryotic ribosomal protein eS17 family. As to quaternary structure, component of the small ribosomal subunit (SSU). Mature N.crassa ribosomes consist of a small (40S) and a large (60S) subunit. The 40S small subunit contains 1 molecule of ribosomal RNA (18S rRNA) and at least 32 different proteins. The large 60S subunit contains 3 rRNA molecules (26S, 5.8S and 5S rRNA) and at least 42 different proteins.

The protein localises to the cytoplasm. Functionally, component of the ribosome, a large ribonucleoprotein complex responsible for the synthesis of proteins in the cell. The small ribosomal subunit (SSU) binds messenger RNAs (mRNAs) and translates the encoded message by selecting cognate aminoacyl-transfer RNA (tRNA) molecules. The large subunit (LSU) contains the ribosomal catalytic site termed the peptidyl transferase center (PTC), which catalyzes the formation of peptide bonds, thereby polymerizing the amino acids delivered by tRNAs into a polypeptide chain. The nascent polypeptides leave the ribosome through a tunnel in the LSU and interact with protein factors that function in enzymatic processing, targeting, and the membrane insertion of nascent chains at the exit of the ribosomal tunnel. This Neurospora crassa (strain ATCC 24698 / 74-OR23-1A / CBS 708.71 / DSM 1257 / FGSC 987) protein is Small ribosomal subunit protein eS17 (rps-17).